Reading from the N-terminus, the 91-residue chain is Ixochymostatin (91 aa).

Residues 1-20 (MKTYVLQALLLTLAVAVVRA) form the signal peptide. 5 cysteine pairs are disulfide-bonded: Cys-34–Cys-70, Cys-43–Cys-66, Cys-48–Cys-62, Cys-53–Cys-90, and Cys-72–Cys-84. The TIL domain occupies 34 to 90 (CAEGETWKECVGSSCAELTCEHPEPSLGCTYDCNYGCYCAPDFFRNANKECVKKDKC).

Belongs to the serine protease inhibitor-like (TIL domain-containing) family. Salivary gland. Midgut.

Its subcellular location is the secreted. In terms of biological role, tight-binding competitive inhibitor of chymotrypsin-like proteases; inhibits host chymase, cathepsin G (CTSG) and chymotrypsin. Inhibits chymase-mediated generation of vasoconstrictor peptides: angiotensin II and endothelin I. Reduces chymase-mediated vascular permeability and vascular endothelial-cadherin degradation. The polypeptide is Ixochymostatin (Ixodes scapularis (Black-legged tick)).